A 618-amino-acid chain; its full sequence is Uptake hydrogenase large subunit (618 aa).

Ni(2+)-binding residues include Cys-75, Cys-78, Cys-597, and Cys-600.

This sequence belongs to the [NiFe]/[NiFeSe] hydrogenase large subunit family. In terms of assembly, heterodimer of a large and a small subunit. Ni(2+) serves as cofactor.

It is found in the cell membrane. The catalysed reaction is H2 + A = AH2. This enzyme recycles the H(2) produced by nitrogenase to increase the production of ATP and to protect nitrogenase against inhibition or damage by O(2) under carbon- or phosphate-limited conditions. The chain is Uptake hydrogenase large subunit (hupB) from Rubrivivax gelatinosus (Rhodocyclus gelatinosus).